The primary structure comprises 88 residues: MPQIIAKCNGRVLVGTVISDKNDKTIIVHVETLVKHPLLKKFIRHRKKFTAHDPLNECSIGDTVKIIEFRPLSRNKRWHLVAILEKAV.

The protein belongs to the universal ribosomal protein uS17 family. As to quaternary structure, part of the 30S ribosomal subunit.

In terms of biological role, one of the primary rRNA binding proteins, it binds specifically to the 5'-end of 16S ribosomal RNA. This chain is Small ribosomal subunit protein uS17, found in Lawsonia intracellularis (strain PHE/MN1-00).